The following is a 118-amino-acid chain: Holo-[acyl-carrier-protein] synthase (118 aa).

Positions 6 and 55 each coordinate Mg(2+).

The protein belongs to the P-Pant transferase superfamily. AcpS family. Requires Mg(2+) as cofactor.

Its subcellular location is the cytoplasm. The catalysed reaction is apo-[ACP] + CoA = holo-[ACP] + adenosine 3',5'-bisphosphate + H(+). In terms of biological role, transfers the 4'-phosphopantetheine moiety from coenzyme A to a Ser of acyl-carrier-protein. The chain is Holo-[acyl-carrier-protein] synthase from Chlorobium chlorochromatii (strain CaD3).